A 354-amino-acid polypeptide reads, in one-letter code: Methionine import ATP-binding protein MetN 2 (354 aa).

The region spanning 6-250 is the ABC transporter domain; it reads IELKNISVHF…PQKPLTKEFI (245 aa). 42 to 49 contributes to the ATP binding site; it reads GYSGAGKS.

The protein belongs to the ABC transporter superfamily. Methionine importer (TC 3.A.1.24) family. As to quaternary structure, the complex is composed of two ATP-binding proteins (MetN), two transmembrane proteins (MetI) and a solute-binding protein (MetQ).

It is found in the cell membrane. It carries out the reaction L-methionine(out) + ATP + H2O = L-methionine(in) + ADP + phosphate + H(+). The catalysed reaction is D-methionine(out) + ATP + H2O = D-methionine(in) + ADP + phosphate + H(+). In terms of biological role, part of the ABC transporter complex MetNIQ involved in methionine import. Responsible for energy coupling to the transport system. The protein is Methionine import ATP-binding protein MetN 2 of Oenococcus oeni (strain ATCC BAA-331 / PSU-1).